Here is a 139-residue protein sequence, read N- to C-terminus: Large ribosomal subunit protein uL16 (139 aa).

The protein belongs to the universal ribosomal protein uL16 family. Part of the 50S ribosomal subunit.

Functionally, binds 23S rRNA and is also seen to make contacts with the A and possibly P site tRNAs. This Treponema pallidum (strain Nichols) protein is Large ribosomal subunit protein uL16.